Reading from the N-terminus, the 305-residue chain is Oxygen-dependent coproporphyrinogen-III oxidase (305 aa).

Position 98 (S98) interacts with substrate. Residues H102 and H112 each coordinate a divalent metal cation. The active-site Proton donor is H112. A substrate-binding site is contributed by N114 to R116. A divalent metal cation contacts are provided by H151 and H181. The segment at Y246–E281 is important for dimerization. Residue G264–R266 coordinates substrate.

It belongs to the aerobic coproporphyrinogen-III oxidase family. As to quaternary structure, homodimer. Requires a divalent metal cation as cofactor.

It localises to the cytoplasm. It catalyses the reaction coproporphyrinogen III + O2 + 2 H(+) = protoporphyrinogen IX + 2 CO2 + 2 H2O. It functions in the pathway porphyrin-containing compound metabolism; protoporphyrin-IX biosynthesis; protoporphyrinogen-IX from coproporphyrinogen-III (O2 route): step 1/1. Functionally, involved in the heme biosynthesis. Catalyzes the aerobic oxidative decarboxylation of propionate groups of rings A and B of coproporphyrinogen-III to yield the vinyl groups in protoporphyrinogen-IX. In Vibrio vulnificus (strain YJ016), this protein is Oxygen-dependent coproporphyrinogen-III oxidase.